The sequence spans 575 residues: MDGDRSKRDSYWSTSPGGSTTKLVSDSERSGKVDTWLLILAFTQWALSIATVIICIVIAARQGYSMERYSMTVEALNTSNKEVKESLTSLIRQEVITRAANIQSSVQTGIPVLLNKNSRDVIRLIEKSCNRQELTQLCDSTIAVHHAEGIAPLEPHSFWRCPAGEPYLSSDPEVSLLPGPSLLSGSTTISGCVRLPSLSIGEAIYAYSSNLITQGCADIGKSYQVLQLGYISLNSDMFPDLNPVVSHTYDINDNRKSCSVVATGTRGYQLCSMPIVDERTDYSSDGIEDLVLDILDLKGRTKSHRYSNSEIDLDHPFSALYPSVGSGIATEGSLIFLGYGGLTTPLQGDTKCRIQGCQQVSQDTCNEALKITWLGGKQVVSVLIQVNDYLSERPRIRVTTIPITQNYLGAEGRLLKLGDQVYIYTRSSGWHSQLQIGVLDVSHPLTISWTPHEALSRPGNEDCNWYNTCPKECISGVYTDAYPLSPDAANVATVTLYANTSRVNPTIMYSNTTNIINMLRIKDVQLEAAYTTTSCITHFGKGYCFHIIEINQKSLNTLQPMLFKTSIPKLCKAES.

The span at 1-10 shows a compositional bias: basic and acidic residues; it reads MDGDRSKRDS. A disordered region spans residues 1-25; the sequence is MDGDRSKRDSYWSTSPGGSTTKLVS. The Intravirion portion of the chain corresponds to 1-37; that stretch reads MDGDRSKRDSYWSTSPGGSTTKLVSDSERSGKVDTWL. The interval 10-14 is incorporation in virion; sequence SYWST. The segment covering 11–24 has biased composition (polar residues); that stretch reads YWSTSPGGSTTKLV. A helical membrane pass occupies residues 38–58; the sequence is LILAFTQWALSIATVIICIVI. The segment at 59–140 is involved in interaction with F protein; that stretch reads AARQGYSMER…RQELTQLCDS (82 aa). Over 59 to 575 the chain is Virion surface; sequence AARQGYSMER…SIPKLCKAES (517 aa). A glycan (N-linked (GlcNAc...) asparagine; by host) is linked at Asn-77. Disulfide bonds link Cys-192/Cys-216, Cys-258/Cys-271, Cys-357/Cys-469, and Cys-463/Cys-473. The tract at residues 254–259 is involved in neuraminidase activity; sequence NRKSCS. N-linked (GlcNAc...) asparagine; by host glycans are attached at residues Asn-499 and Asn-511. A disulfide bond links Cys-535 and Cys-544.

This sequence belongs to the paramyxoviruses hemagglutinin-neuraminidase family. In terms of assembly, homotetramer; composed of disulfide-linked homodimers. Interacts with F protein trimer. N-glycosylated; glycans consist of a mixture of high mannose-type oligosaccharides and of complex-type oligosaccharides.

It localises to the virion membrane. It is found in the host cell membrane. The enzyme catalyses Hydrolysis of alpha-(2-&gt;3)-, alpha-(2-&gt;6)-, alpha-(2-&gt;8)- glycosidic linkages of terminal sialic acid residues in oligosaccharides, glycoproteins, glycolipids, colominic acid and synthetic substrates.. Attaches the virus to sialic acid-containing cell receptors and thereby initiating infection. Binding of HN protein to the receptor induces a conformational change that allows the F protein to trigger virion/cell membranes fusion. Functionally, neuraminidase activity ensures the efficient spread of the virus by dissociating the mature virions from the neuraminic acid containing glycoproteins. This Cavia cutleri (Guinea pig) protein is Hemagglutinin-neuraminidase (HN).